Reading from the N-terminus, the 538-residue chain is Cytochrome P450 monooxygenase okaG (538 aa).

The helical transmembrane segment at 3–23 (LISPLAAVLSAMAIVLGLLFF) threads the bilayer. Heme is bound at residue Cys-484.

The protein belongs to the cytochrome P450 family. The cofactor is heme.

It localises to the membrane. The enzyme catalyses 12-deshydroxyl okaramine E + 2 reduced [NADPH--hemoprotein reductase] + 2 O2 = 3-desmethyl okaramine B + 2 oxidized [NADPH--hemoprotein reductase] + 2 H2O + 2 H(+). Its pathway is alkaloid biosynthesis. In terms of biological role, nonribosomal peptide synthetase; part of the gene cluster that mediates the biosynthesis of okaramine B, a prenylated indole alkaloid that possesses an unusual octacyclic ring system, including a four-membered azetidine ring and an eight-membered azocine ring, and that exhibits insecticidal activity against silkworm larvae. Within the pathway, okaG acts as a 2,3-diol synthase that installs 2,3-diol on the okaramine scaffold to convert 12-deshydroxyl okaramine E into 3-desmethyl okaramine B. OkaG is also able to produce use okaramine E and produce okaramine D with the help of the methyltransferase okaF. The biosynthesis begins with the NRPS okaA that condenses two tryptophan molecules into cyclo(L-Trp-L-Trp). Prenylation by the prenyltransferase okaC then leads to the formation of cyclo(N8-(alpha,alpha-dimethylallyl)-L-Trp-6a-(alpha,alpha-dime-thylallyl)-L-Trp). This is followed by indole 2,3-epoxidation by the FAD-dependent monooxygenase okaB to facilitate the formation of the hexahydropyrrolo[2,3-b]indole (HPI) moiety of okaramine C. The cytochrome P450 monooxygenase okaD then likely catalyzes formation of the eight-membered ring of okaramine A. The dioxygenase okaE further forms the unusual 2-dimethyl-3-methyl-azetidine ring to yield 12-deshydroxyl okaramine E, as well as the hydroxylation of 12-deshydroxyl okaramine E to produce okaramine E. The cytochrome P450 monoxygenase okaG converts 12-deshydroxyl okaramine E into 3-desmethyl okaramine B which is further methylated by the methyltransferase okaF into okaramine B. In a shunt pathway, okaG and okaF together are also able to convert okaramine E into okaramine D. Okaramine H is produced by nonenzymatic conversion from okaramine A. The protein is Cytochrome P450 monooxygenase okaG of Penicillium ochrochloron.